A 140-amino-acid polypeptide reads, in one-letter code: uncharacterized protein (140 aa).

The VOC domain maps to Arg-3–Pro-131. Residues His-6, Glu-53, His-77, and Glu-127 each coordinate a divalent metal cation.

Belongs to the methylmalonyl-CoA epimerase family.

This is an uncharacterized protein from Bacillus subtilis (strain 168).